The sequence spans 276 residues: Small ribosomal subunit protein uS2 (276 aa).

2 disordered regions span residues 209-233 (AQEAAAAAQAAKETAEPTTEGAADV) and 252-276 (VDWSAEGAQDWAADGAAEQATSSWE). The segment covering 211-231 (EAAAAAQAAKETAEPTTEGAA) has biased composition (low complexity).

It belongs to the universal ribosomal protein uS2 family. Component of the small ribosomal subunit. Mature ribosomes consist of a small (40S) and a large (60S) subunit. The 40S subunit contains about 33 different proteins and 1 molecule of RNA (18S). The 60S subunit contains about 49 different proteins and 3 molecules of RNA (25S, 5.8S and 5S). Interacts with RPS21.

Its subcellular location is the cytoplasm. Required for the assembly and/or stability of the 40S ribosomal subunit. Required for the processing of the 20S rRNA-precursor to mature 18S rRNA in a late step of the maturation of 40S ribosomal subunits. The sequence is that of Small ribosomal subunit protein uS2 from Mycosarcoma maydis (Corn smut fungus).